The sequence spans 484 residues: EF-hand calcium-binding domain-containing protein 14 (484 aa).

Disordered regions lie at residues 1 to 48, 227 to 255, and 313 to 395; these read MKKR…TDEE, GSME…HSES, and EQRT…FTSD. Positions 37–48 are enriched in acidic residues; that stretch reads PDSDSESSTDEE. Composition is skewed to polar residues over residues 228 to 239, 315 to 324, and 335 to 347; these read SMENNGSNQILP, RTNVSSSTME, and LVTN…QAQS. EF-hand domains are found at residues 423-452 and 453-484; these read SSIK…WNSL and GSAM…ALGI. 5 residues coordinate Ca(2+): Asp466, Asn468, Asp470, Arg472, and Glu477.

This Mus musculus (Mouse) protein is EF-hand calcium-binding domain-containing protein 14 (Efcab14).